Reading from the N-terminus, the 79-residue chain is MAGGRRGGRAKRRKVCYFTSNGITHIDYKDVDLLKKFVSERGKILPRRVTGTNAKYQRKLTAAIKRARQMALLPYVSGE.

It belongs to the bacterial ribosomal protein bS18 family. As to quaternary structure, part of the 30S ribosomal subunit. Forms a tight heterodimer with protein bS6.

Functionally, binds as a heterodimer with protein bS6 to the central domain of the 16S rRNA, where it helps stabilize the platform of the 30S subunit. In Bacillus subtilis (strain 168), this protein is Small ribosomal subunit protein bS18 (rpsR).